Reading from the N-terminus, the 425-residue chain is Probable G-protein coupled receptor 63 (425 aa).

The Extracellular segment spans residues 1–87 (MVVSGVLTAP…VFKSLNLAVQ (87 aa)). N-linked (GlcNAc...) asparagine glycosylation is found at N22, N34, and N68. The chain crosses the membrane as a helical span at residues 88–112 (IILSAIMIFILFVSFLGNLVVCLMV). At 113-123 (YQKAAMRSAIN) the chain is on the cytoplasmic side. A helical membrane pass occupies residues 124–148 (ILLASLAFADMLLAVLNMPFALVTI). The Extracellular segment spans residues 149 to 165 (LTTRWIFGKFFCRLSAM). The chain crosses the membrane as a helical span at residues 166-190 (FFWLFVIEGVAILLIISIDRFLIIV). Over 191 to 202 (QRQDKLNPYRAK) the chain is Cytoplasmic. A helical transmembrane segment spans residues 203-222 (VLIAVSWATAFSVAFPLAVG). At 223–247 (NPDLQIPSRAPQCVFGYTTNSGYQA) the chain is on the extracellular side. Residues 248 to 272 (YVILISLISFFIPFLVILYSFMGIL) traverse the membrane as a helical segment. Over 273-321 (NTLRHNALRIHSYPEGICLSQASKLGLMSLQRPFQMSIDMGFKTRAFTT) the chain is Cytoplasmic. A helical membrane pass occupies residues 322–345 (ILILFAVFIVCWAPFTTYSLVATF). Residues 346-357 (SKHFYYQHNFFE) are Extracellular-facing. Residues 358–379 (ISTWLLWLCYLKSALNPLIYYW) traverse the membrane as a helical segment. The Cytoplasmic portion of the chain corresponds to 380 to 425 (RIKKFHDACLDMMPKSFKFLPRLPGHTRRRIRPSAVYVCGEHRTVL).

This sequence belongs to the G-protein coupled receptor 1 family. Brain specific.

It localises to the cell membrane. Orphan receptor. May play a role in brain function. The chain is Probable G-protein coupled receptor 63 (Gpr63) from Mus musculus (Mouse).